Reading from the N-terminus, the 265-residue chain is DNA repair protein RecO (265 aa).

It belongs to the RecO family.

Its function is as follows. Involved in DNA repair and RecF pathway recombination. This Mycolicibacterium paratuberculosis (strain ATCC BAA-968 / K-10) (Mycobacterium paratuberculosis) protein is DNA repair protein RecO.